The following is a 366-amino-acid chain: Tetraacyldisaccharide 4'-kinase (366 aa).

65-72 contributes to the ATP binding site; it reads TVGGTGKT. Positions 343–366 are disordered; it reads AKSTPASGGATGLNKEHQDGQPAA. Basic and acidic residues predominate over residues 356–366; that stretch reads NKEHQDGQPAA.

It belongs to the LpxK family.

The enzyme catalyses a lipid A disaccharide + ATP = a lipid IVA + ADP + H(+). It functions in the pathway glycolipid biosynthesis; lipid IV(A) biosynthesis; lipid IV(A) from (3R)-3-hydroxytetradecanoyl-[acyl-carrier-protein] and UDP-N-acetyl-alpha-D-glucosamine: step 6/6. In terms of biological role, transfers the gamma-phosphate of ATP to the 4'-position of a tetraacyldisaccharide 1-phosphate intermediate (termed DS-1-P) to form tetraacyldisaccharide 1,4'-bis-phosphate (lipid IVA). This Cupriavidus pinatubonensis (strain JMP 134 / LMG 1197) (Cupriavidus necator (strain JMP 134)) protein is Tetraacyldisaccharide 4'-kinase.